The primary structure comprises 423 residues: Putative competence-damage inducible protein (423 aa).

Belongs to the CinA family.

The polypeptide is Putative competence-damage inducible protein (Streptococcus uberis (strain ATCC BAA-854 / 0140J)).